The sequence spans 376 residues: Glutamate 5-kinase (376 aa).

K18 is a binding site for ATP. Substrate contacts are provided by S58, D145, and N157. ATP contacts are provided by residues S177–D178 and T218–K224. Positions T280–P358 constitute a PUA domain.

Belongs to the glutamate 5-kinase family.

The protein localises to the cytoplasm. It catalyses the reaction L-glutamate + ATP = L-glutamyl 5-phosphate + ADP. It participates in amino-acid biosynthesis; L-proline biosynthesis; L-glutamate 5-semialdehyde from L-glutamate: step 1/2. Its function is as follows. Catalyzes the transfer of a phosphate group to glutamate to form L-glutamate 5-phosphate. The protein is Glutamate 5-kinase of Mycobacterium tuberculosis (strain ATCC 25177 / H37Ra).